We begin with the raw amino-acid sequence, 760 residues long: Colleterpenol synthase (760 aa).

Positions 14–335 are terpene cyclase; that stretch reads ASSGLRSKFR…YTRRYPSKAD (322 aa). Residue Asp-95 participates in Mg(2+) binding. The short motif at 95-99 is the DDXXD 1 element; the sequence is DDYYD. Positions 233–241 match the NSE/DTE motif; sequence NDLYSWPKE. The tract at residues 336 to 759 is prenyltransferase; it reads LRQPEVEFVD…LELVLRRLWI (424 aa). A disordered region spans residues 359-400; the sequence is EEKVVSESVESLPTTEVEDEFSSSDASPGSVDQAISTPPSTT. The span at 391–400 shows a compositional bias: polar residues; the sequence is QAISTPPSTT. The isopentenyl diphosphate site is built by Lys-477, Arg-480, and His-509. Asp-516 and Asp-520 together coordinate Mg(2+). The short motif at 516–520 is the DDXXD 2 element; the sequence is DDIED. Arg-525 lines the dimethylallyl diphosphate pocket. Arg-526 is an isopentenyl diphosphate binding site. 6 residues coordinate dimethylallyl diphosphate: Lys-605, Thr-606, Gln-643, Asn-650, Lys-660, and Lys-670.

In the N-terminal section; belongs to the terpene synthase family. This sequence in the C-terminal section; belongs to the FPP/GGPP synthase family. As to quaternary structure, hexamer. The cofactor is Mg(2+).

The catalysed reaction is 5 isopentenyl diphosphate + dimethylallyl diphosphate = all-trans-hexaprenyl diphosphate + 5 diphosphate. It catalyses the reaction all-trans-hexaprenyl diphosphate + H2O = colleterpenol + diphosphate. In terms of biological role, bifunctional terpene synthase that converts dimethylallyl diphosphate (DMAPP) and isopentenyl diphosphate (IPP) into colleterpenol as a single product. The C-terminal prenyltransferase (PT) domain of CgCS catalyzes formation of hexaprenyl diphosphate (HexPP), whereas the N-terminal terpene cyclase (TC) domain catalyzes the cyclization of HexPP to colleterpenol. In Colletotrichum gloeosporioides (Anthracnose fungus), this protein is Colleterpenol synthase.